A 130-amino-acid chain; its full sequence is Small ribosomal subunit protein uS9 (130 aa).

The segment at 106 to 130 (RDSRKVERKKPGLKKARKASQFSKR) is disordered. The segment covering 111–130 (VERKKPGLKKARKASQFSKR) has biased composition (basic residues).

It belongs to the universal ribosomal protein uS9 family.

The chain is Small ribosomal subunit protein uS9 from Streptococcus pneumoniae (strain ATCC 700669 / Spain 23F-1).